We begin with the raw amino-acid sequence, 439 residues long: ATP-dependent RNA helicase RhlB (439 aa).

The Q motif motif lies at 9–37 (QKFADLPLHPEVKQALAENGFEFCTPIQA). The Helicase ATP-binding domain maps to 40–219 (LPVLLQSKDI…YDHMNDPVKV (180 aa)). Residue 53 to 60 (AQTGTGKT) participates in ATP binding. Positions 165-168 (DEAD) match the DEAD box motif. The Helicase C-terminal domain occupies 243–390 (KIRLLLTLIE…VSNYDRDALL (148 aa)). Residues 395 to 439 (PPVKIHRKHPAGARNLRERSGAGRPQGAHRSGGRPPRHDRTRRQP) form a disordered region. Residues 425–439 (SGGRPPRHDRTRRQP) are compositionally biased toward basic residues.

This sequence belongs to the DEAD box helicase family. RhlB subfamily. As to quaternary structure, component of the RNA degradosome, which is a multiprotein complex involved in RNA processing and mRNA degradation.

The protein resides in the cytoplasm. The catalysed reaction is ATP + H2O = ADP + phosphate + H(+). Functionally, DEAD-box RNA helicase involved in RNA degradation. Has RNA-dependent ATPase activity and unwinds double-stranded RNA. The sequence is that of ATP-dependent RNA helicase RhlB from Shewanella sp. (strain MR-4).